The primary structure comprises 485 residues: Catalase isozyme 1 (485 aa).

Active-site residues include H58 and N131. Y341 lines the heme pocket.

The protein belongs to the catalase family. Homotetramer. Heme is required as a cofactor.

It is found in the peroxisome. It catalyses the reaction 2 H2O2 = O2 + 2 H2O. Occurs in almost all aerobically respiring organisms and serves to protect cells from the toxic effects of hydrogen peroxide. The chain is Catalase isozyme 1 (CAT1) from Nicotiana plumbaginifolia (Leadwort-leaved tobacco).